A 329-amino-acid polypeptide reads, in one-letter code: Peroxidase 18 (329 aa).

A signal peptide spans Met-1–Ala-29. Disulfide bonds link Cys-40–Cys-116, Cys-73–Cys-78, Cys-122–Cys-325, and Cys-201–Cys-235. The active-site Proton acceptor is the His-71. Ca(2+) contacts are provided by Asp-72, Val-75, Gly-77, Asp-79, and Ser-81. Asn-87 carries an N-linked (GlcNAc...) asparagine glycan. Substrate is bound at residue Ile-164. Residue His-194 participates in heme b binding. Thr-195 is a binding site for Ca(2+). Ca(2+)-binding residues include Asp-249, Thr-252, and Asp-257.

It belongs to the peroxidase family. Classical plant (class III) peroxidase subfamily. The cofactor is heme b. Requires Ca(2+) as cofactor.

It localises to the secreted. It catalyses the reaction 2 a phenolic donor + H2O2 = 2 a phenolic radical donor + 2 H2O. Functionally, removal of H(2)O(2), oxidation of toxic reductants, biosynthesis and degradation of lignin, suberization, auxin catabolism, response to environmental stresses such as wounding, pathogen attack and oxidative stress. These functions might be dependent on each isozyme/isoform in each plant tissue. The chain is Peroxidase 18 (PER18) from Arabidopsis thaliana (Mouse-ear cress).